The following is a 629-amino-acid chain: uncharacterized protein (629 aa).

Methionine 1 bears the N-acetylmethionine mark. The tract at residues 308–395 (VDPEPEPDPP…PGRRSRARNA (88 aa)) is disordered. Polar residues predominate over residues 322–334 (SANEPASQPNSRS). The region spanning 451-587 (LVIFVVDASG…VAEGAAAVVV (137 aa)) is the VWFA domain.

The protein belongs to the Mg-chelatase subunits D/I family.

This is an uncharacterized protein from Mycobacterium tuberculosis (strain ATCC 25618 / H37Rv).